Here is a 947-residue protein sequence, read N- to C-terminus: Bifunctional glutamine synthetase adenylyltransferase/adenylyl-removing enzyme (947 aa).

Positions 1 to 440 are adenylyl removase; the sequence is MTPLSSPLSQ…VFNELIGDDE (440 aa). Residues 450–947 are adenylyl transferase; it reads SEPWREVWQD…ASWRKWLVAV (498 aa).

It belongs to the GlnE family. Mg(2+) is required as a cofactor.

The catalysed reaction is [glutamine synthetase]-O(4)-(5'-adenylyl)-L-tyrosine + phosphate = [glutamine synthetase]-L-tyrosine + ADP. It catalyses the reaction [glutamine synthetase]-L-tyrosine + ATP = [glutamine synthetase]-O(4)-(5'-adenylyl)-L-tyrosine + diphosphate. Involved in the regulation of glutamine synthetase GlnA, a key enzyme in the process to assimilate ammonia. When cellular nitrogen levels are high, the C-terminal adenylyl transferase (AT) inactivates GlnA by covalent transfer of an adenylyl group from ATP to specific tyrosine residue of GlnA, thus reducing its activity. Conversely, when nitrogen levels are low, the N-terminal adenylyl removase (AR) activates GlnA by removing the adenylyl group by phosphorolysis, increasing its activity. The regulatory region of GlnE binds the signal transduction protein PII (GlnB) which indicates the nitrogen status of the cell. In Salmonella paratyphi C (strain RKS4594), this protein is Bifunctional glutamine synthetase adenylyltransferase/adenylyl-removing enzyme.